Consider the following 306-residue polypeptide: Probable 2-dehydro-3-deoxygalactonokinase DgoK1 (306 aa).

Belongs to the DgoK family.

The catalysed reaction is 2-dehydro-3-deoxy-D-galactonate + ATP = 2-dehydro-3-deoxy-6-phospho-D-galactonate + ADP + H(+). It functions in the pathway carbohydrate acid metabolism; D-galactonate degradation; D-glyceraldehyde 3-phosphate and pyruvate from D-galactonate: step 2/3. Its function is as follows. Involved in the degradation of galactose via the DeLey-Doudoroff pathway. The sequence is that of Probable 2-dehydro-3-deoxygalactonokinase DgoK1 (dgoK1) from Rhizobium meliloti (strain 1021) (Ensifer meliloti).